The primary structure comprises 185 residues: MILMKDIIREGNPTLREIAQPVSFPLSDEDRQLAADMMTFLENSQDPEIAAKYQLRAGVGLAAPQVDVSKQMSAVLVPGPEGEAPILKDVIINPKIISHSVQDAALAEGEGCLSVDREVPGYVPRHDRITLRYQDVEGVSHKIRLKNYPAIVCQHEIDHLNGILFFDHINKENPFAAPDDMIILE.

Fe cation contacts are provided by cysteine 112 and histidine 155. Glutamate 156 is an active-site residue. Residue histidine 159 participates in Fe cation binding.

Belongs to the polypeptide deformylase family. Fe(2+) serves as cofactor.

The catalysed reaction is N-terminal N-formyl-L-methionyl-[peptide] + H2O = N-terminal L-methionyl-[peptide] + formate. Its function is as follows. Removes the formyl group from the N-terminal Met of newly synthesized proteins. Requires at least a dipeptide for an efficient rate of reaction. N-terminal L-methionine is a prerequisite for activity but the enzyme has broad specificity at other positions. The polypeptide is Peptide deformylase (Latilactobacillus sakei subsp. sakei (strain 23K) (Lactobacillus sakei subsp. sakei)).